A 169-amino-acid chain; its full sequence is Benzoate 1,2-dioxygenase subunit beta (169 aa).

This sequence belongs to the bacterial ring-hydroxylating dioxygenase beta subunit family. This dioxygenase system consists of three proteins: the two subunits of the hydroxylase (BenA and BenB), and an electron transfer component (BenC).

The enzyme catalyses benzoate + NADH + O2 + H(+) = (1R,6S)-1,6-dihydroxycyclohexa-2,4-diene-1-carboxylate + NAD(+). It participates in aromatic compound metabolism; benzoate degradation via hydroxylation; catechol from benzoate: step 1/2. Its function is as follows. Degradation of benzoate to 2-hydro-1,2-dihydroxybenzoate (DHB). The beta subunit may be responsible for the substrate specificity of the enzyme. In Acinetobacter baylyi (strain ATCC 33305 / BD413 / ADP1), this protein is Benzoate 1,2-dioxygenase subunit beta (benB).